The following is a 267-amino-acid chain: Enolase-phosphatase E1 (267 aa).

Asp11 and Glu13 together coordinate Mg(2+). Residues 155–156 (SS) and Lys189 each bind substrate. Asp215 lines the Mg(2+) pocket.

The protein belongs to the HAD-like hydrolase superfamily. MasA/MtnC family. As to quaternary structure, monomer. The cofactor is Mg(2+).

It localises to the cytoplasm. The protein resides in the nucleus. It carries out the reaction 5-methylsulfanyl-2,3-dioxopentyl phosphate + H2O = 1,2-dihydroxy-5-(methylsulfanyl)pent-1-en-3-one + phosphate. It functions in the pathway amino-acid biosynthesis; L-methionine biosynthesis via salvage pathway; L-methionine from S-methyl-5-thio-alpha-D-ribose 1-phosphate: step 3/6. The protein operates within amino-acid biosynthesis; L-methionine biosynthesis via salvage pathway; L-methionine from S-methyl-5-thio-alpha-D-ribose 1-phosphate: step 4/6. Its function is as follows. Bifunctional enzyme that catalyzes the enolization of 2,3-diketo-5-methylthiopentyl-1-phosphate (DK-MTP-1-P) into the intermediate 2-hydroxy-3-keto-5-methylthiopentenyl-1-phosphate (HK-MTPenyl-1-P), which is then dephosphorylated to form the acireductone 1,2-dihydroxy-3-keto-5-methylthiopentene (DHK-MTPene). This is Enolase-phosphatase E1 (enoph1) from Dictyostelium discoideum (Social amoeba).